A 270-amino-acid chain; its full sequence is Putative tRNA (cytidine(32)/guanosine(34)-2'-O)-methyltransferase (270 aa).

Gly53, Trp55, Asp78, Asp94, and Asp119 together coordinate S-adenosyl-L-methionine. Residue Lys159 is the Proton acceptor of the active site.

Belongs to the class I-like SAM-binding methyltransferase superfamily. RNA methyltransferase RlmE family. TRM7 subfamily.

It is found in the cytoplasm. It carries out the reaction cytidine(32)/guanosine(34) in tRNA + 2 S-adenosyl-L-methionine = 2'-O-methylcytidine(32)/2'-O-methylguanosine(34) in tRNA + 2 S-adenosyl-L-homocysteine + 2 H(+). Functionally, methylates the 2'-O-ribose of nucleotides at positions 32 and 34 of the tRNA anticodon loop of substrate tRNAs. This chain is Putative tRNA (cytidine(32)/guanosine(34)-2'-O)-methyltransferase (fsjA), found in Dictyostelium discoideum (Social amoeba).